Reading from the N-terminus, the 566-residue chain is Cyclin-dependent kinase-like 2 (566 aa).

The Protein kinase domain occupies 4–287 (YENLGLVGEG…CAELLHHDFF (284 aa)). Residues 10 to 18 (VGEGSYGMV) and Lys33 each bind ATP. Positions 45–51 (KKIAMRE) match the [NKR]KIAxRE motif. The Proton acceptor role is filled by Asp126. Disordered regions lie at residues 307 to 334 (DARN…GEER) and 545 to 566 (QVSG…EHQH). A compositionally biased stretch (basic and acidic residues) spans 320 to 334 (RKKEKEKDDSLGEER).

It belongs to the protein kinase superfamily. CMGC Ser/Thr protein kinase family. CDC2/CDKX subfamily.

It is found in the cytoplasm. Its subcellular location is the nucleus. The enzyme catalyses L-seryl-[protein] + ATP = O-phospho-L-seryl-[protein] + ADP + H(+). It carries out the reaction L-threonyl-[protein] + ATP = O-phospho-L-threonyl-[protein] + ADP + H(+). The chain is Cyclin-dependent kinase-like 2 from Oryctolagus cuniculus (Rabbit).